We begin with the raw amino-acid sequence, 379 residues long: Cytochrome b (379 aa).

4 consecutive transmembrane segments (helical) span residues 33 to 53, 77 to 98, 113 to 133, and 178 to 198; these read FGSLLGLCLIAQILTGLFLAM, WLIRNMHANGASFFFICIYLHI, WNVGVVLLLLVMMTAFVGYVL, and FFAFHFLLPFIGAAATLVHLI. Heme b contacts are provided by His-83 and His-97. His-182 and His-196 together coordinate heme b. His-201 lines the a ubiquinone pocket. Helical transmembrane passes span 226 to 246, 288 to 308, 320 to 340, and 347 to 367; these read YKDILGFTFLLTALIALALFS, LGGVLALLASILVLMVVPLLH, FTQVLFWLLIADVAILTWIGG, and FIIIGQVASFLYFSLFLVLAP.

Belongs to the cytochrome b family. In terms of assembly, the cytochrome bc1 complex contains 3 respiratory subunits (MT-CYB, CYC1 and UQCRFS1), 2 core proteins (UQCRC1 and UQCRC2) and probably 6 low-molecular weight proteins. The cofactor is heme b.

The protein resides in the mitochondrion inner membrane. Functionally, component of the ubiquinol-cytochrome c reductase complex (complex III or cytochrome b-c1 complex) that is part of the mitochondrial respiratory chain. The b-c1 complex mediates electron transfer from ubiquinol to cytochrome c. Contributes to the generation of a proton gradient across the mitochondrial membrane that is then used for ATP synthesis. The polypeptide is Cytochrome b (mt-cyb) (Poeciliopsis occidentalis (Gila topminnow)).